We begin with the raw amino-acid sequence, 189 residues long: Interferon alpha-1 (189 aa).

The signal sequence occupies residues M1–G23. Disulfide bonds link C24–C122 and C52–C162.

The protein belongs to the alpha/beta interferon family. Interacts with CR2.

The protein resides in the secreted. Produced by macrophages, IFN-alpha have antiviral activities. Interferon stimulates the production of two enzymes: a protein kinase and an oligoadenylate synthetase. This is Interferon alpha-1 from Bos taurus (Bovine).